Consider the following 1287-residue polypeptide: DNA-directed RNA polymerase subunit beta (1287 aa).

The protein belongs to the RNA polymerase beta chain family. As to quaternary structure, the RNAP catalytic core consists of 2 alpha, 1 beta, 1 beta' and 1 omega subunit. When a sigma factor is associated with the core the holoenzyme is formed, which can initiate transcription.

It carries out the reaction RNA(n) + a ribonucleoside 5'-triphosphate = RNA(n+1) + diphosphate. In terms of biological role, DNA-dependent RNA polymerase catalyzes the transcription of DNA into RNA using the four ribonucleoside triphosphates as substrates. The polypeptide is DNA-directed RNA polymerase subunit beta (Mycoplasma capricolum subsp. capricolum (strain California kid / ATCC 27343 / NCTC 10154)).